The primary structure comprises 33 residues: Dermaseptin DS VIII-like peptide (33 aa).

The residue at position 33 (Ala33) is an Alanine amide.

In terms of tissue distribution, expressed by the parotoid glands.

It is found in the secreted. Possesses a potent antimicrobial activity against bacteria, fungi and protozoa. Probably acts by disturbing membrane functions with its amphipathic structure. This Phyllomedusa burmeisteri (Brazilian common walking leaf frog) protein is Dermaseptin DS VIII-like peptide.